A 616-amino-acid chain; its full sequence is uncharacterized protein (616 aa).

Disordered regions lie at residues 166–243 and 272–298; these read SRTY…TPEL and DHEEEEGQDDDEETEIEIDRGGPIEEI. Residues 184 to 200 are compositionally biased toward basic and acidic residues; the sequence is RVDESRPSENSSRHDYV. The span at 221–237 shows a compositional bias: polar residues; it reads TRTSNVTQTQPPTNQVF. Positions 272–287 are enriched in acidic residues; the sequence is DHEEEEGQDDDEETEI. Positions 343–417 constitute a Ubiquitin-like domain; it reads ILIKLKFMND…VHCHISTTPY (75 aa).

This is an uncharacterized protein from Caenorhabditis elegans.